A 689-amino-acid chain; its full sequence is DNA ligase (689 aa).

Residues D40–D44, S89–L90, and E121 each bind NAD(+). The active-site N6-AMP-lysine intermediate is K123. The NAD(+) site is built by R144, E179, K295, and K319. Residues C413, C416, C431, and C437 each coordinate Zn(2+). The region spanning R610–V689 is the BRCT domain.

This sequence belongs to the NAD-dependent DNA ligase family. LigA subfamily. Requires Mg(2+) as cofactor. Mn(2+) is required as a cofactor.

It catalyses the reaction NAD(+) + (deoxyribonucleotide)n-3'-hydroxyl + 5'-phospho-(deoxyribonucleotide)m = (deoxyribonucleotide)n+m + AMP + beta-nicotinamide D-nucleotide.. In terms of biological role, DNA ligase that catalyzes the formation of phosphodiester linkages between 5'-phosphoryl and 3'-hydroxyl groups in double-stranded DNA using NAD as a coenzyme and as the energy source for the reaction. It is essential for DNA replication and repair of damaged DNA. The sequence is that of DNA ligase from Rickettsia massiliae (strain Mtu5).